Reading from the N-terminus, the 342-residue chain is Phosphate acyltransferase (342 aa).

The protein belongs to the PlsX family. Homodimer. Probably interacts with PlsY.

It is found in the cytoplasm. It catalyses the reaction a fatty acyl-[ACP] + phosphate = an acyl phosphate + holo-[ACP]. Its pathway is lipid metabolism; phospholipid metabolism. Functionally, catalyzes the reversible formation of acyl-phosphate (acyl-PO(4)) from acyl-[acyl-carrier-protein] (acyl-ACP). This enzyme utilizes acyl-ACP as fatty acyl donor, but not acyl-CoA. This is Phosphate acyltransferase from Shewanella sp. (strain MR-4).